Here is a 135-residue protein sequence, read N- to C-terminus: Mu-like prophage FluMu protein gp46 (135 aa).

To phage Mu protein gp46.

The polypeptide is Mu-like prophage FluMu protein gp46 (Haemophilus influenzae (strain ATCC 51907 / DSM 11121 / KW20 / Rd)).